The chain runs to 253 residues: Ipsdienol dehydrogenase (253 aa).

NAD(+) is bound by residues Val-12–Asn-40 and Asp-63. Ser-149 lines the substrate pocket. Residue Tyr-162 is the Proton acceptor of the active site. Lys-166 is an NAD(+) binding site.

It belongs to the short-chain dehydrogenases/reductases (SDR) family. In terms of tissue distribution, specifically expressed in male midguts. Expressed at higher level in the anterior midgut of fed males.

It localises to the cytoplasm. The protein resides in the cytosol. It catalyses the reaction (4R)-ipsdienol + NADP(+) = ipsdienone + NADPH + H(+). The catalysed reaction is (4R)-ipsdienol + NAD(+) = ipsdienone + NADH + H(+). Catalyzes the oxidation of racemic ipsdienol and (4R)-(-)-ipsdienol to form ipsdienone (2-methyl-6-methylene-2,7-octadien-4-one), an intermediate in the biosynthesis of pheromonal ipsdienol in male pine engraver beetles. In contrast, (4S)-(+)-ipsdienol is not a substrate. This is Ipsdienol dehydrogenase from Ips pini (Pine engraver beetle).